A 599-amino-acid chain; its full sequence is Elongation factor 4 (599 aa).

Residues 2 to 184 (KNIRNFSIIA…RLVRDIPPPE (183 aa)) enclose the tr-type G domain. GTP is bound by residues 14–19 (DHGKST) and 131–134 (NKID).

This sequence belongs to the TRAFAC class translation factor GTPase superfamily. Classic translation factor GTPase family. LepA subfamily.

Its subcellular location is the cell inner membrane. It carries out the reaction GTP + H2O = GDP + phosphate + H(+). Functionally, required for accurate and efficient protein synthesis under certain stress conditions. May act as a fidelity factor of the translation reaction, by catalyzing a one-codon backward translocation of tRNAs on improperly translocated ribosomes. Back-translocation proceeds from a post-translocation (POST) complex to a pre-translocation (PRE) complex, thus giving elongation factor G a second chance to translocate the tRNAs correctly. Binds to ribosomes in a GTP-dependent manner. In Escherichia coli (strain SE11), this protein is Elongation factor 4.